Here is a 312-residue protein sequence, read N- to C-terminus: DNA-directed RNA polymerase subunit alpha (312 aa).

The alpha N-terminal domain (alpha-NTD) stretch occupies residues 1-226 (MIEFEKPIIT…EHLNLFTDLT (226 aa)). The alpha C-terminal domain (alpha-CTD) stretch occupies residues 243–312 (DEKVLDRTIE…DLGLGLKNDK (70 aa)).

The protein belongs to the RNA polymerase alpha chain family. As to quaternary structure, homodimer. The RNAP catalytic core consists of 2 alpha, 1 beta, 1 beta' and 1 omega subunit. When a sigma factor is associated with the core the holoenzyme is formed, which can initiate transcription.

It catalyses the reaction RNA(n) + a ribonucleoside 5'-triphosphate = RNA(n+1) + diphosphate. DNA-dependent RNA polymerase catalyzes the transcription of DNA into RNA using the four ribonucleoside triphosphates as substrates. The chain is DNA-directed RNA polymerase subunit alpha from Streptococcus agalactiae serotype III (strain NEM316).